Consider the following 63-residue polypeptide: Large ribosomal subunit protein uL29 (63 aa).

This sequence belongs to the universal ribosomal protein uL29 family.

In Hahella chejuensis (strain KCTC 2396), this protein is Large ribosomal subunit protein uL29.